We begin with the raw amino-acid sequence, 94 residues long: DNA-directed RNA polymerase subunit omega (94 aa).

This sequence belongs to the RNA polymerase subunit omega family. The RNAP catalytic core consists of 2 alpha, 1 beta, 1 beta' and 1 omega subunit. When a sigma factor is associated with the core the holoenzyme is formed, which can initiate transcription.

The catalysed reaction is RNA(n) + a ribonucleoside 5'-triphosphate = RNA(n+1) + diphosphate. Functionally, promotes RNA polymerase assembly. Latches the N- and C-terminal regions of the beta' subunit thereby facilitating its interaction with the beta and alpha subunits. The polypeptide is DNA-directed RNA polymerase subunit omega (Photobacterium profundum (strain SS9)).